The chain runs to 72 residues: UPF0154 protein lhv_1362 (72 aa).

The chain crosses the membrane as a helical span at residues 3 to 23 (LGLAIFLIIIALLVGAVAGFY).

The protein belongs to the UPF0154 family.

The protein localises to the cell membrane. This chain is UPF0154 protein lhv_1362, found in Lactobacillus helveticus (strain DPC 4571).